A 178-amino-acid polypeptide reads, in one-letter code: Bifunctional protein PyrR (178 aa).

Substrate-binding positions include 42–43 (TR), Arg-83, 103–111 (DDVIYKGRT), Arg-136, and Val-160. Positions 99-111 (VVLVDDVIYKGRT) match the PRPP-binding motif.

Belongs to the purine/pyrimidine phosphoribosyltransferase family. PyrR subfamily.

The catalysed reaction is UMP + diphosphate = 5-phospho-alpha-D-ribose 1-diphosphate + uracil. In terms of biological role, regulates the transcription of the pyrimidine nucleotide (pyr) operon in response to exogenous pyrimidines. Also displays a weak uracil phosphoribosyltransferase activity which is not physiologically significant. The protein is Bifunctional protein PyrR of Synechocystis sp. (strain ATCC 27184 / PCC 6803 / Kazusa).